Consider the following 296-residue polypeptide: Small ribosomal subunit protein uS2m (296 aa).

A disordered region spans residues 274-296 (QGQKEPGDQGPAHPPGADMSHSL).

This sequence belongs to the universal ribosomal protein uS2 family. Component of the mitochondrial small ribosomal subunit (mt-SSU). Mature mammalian 55S mitochondrial ribosomes consist of a small (28S) and a large (39S) subunit. The 28S small subunit contains a 12S ribosomal RNA (12S mt-rRNA) and 30 different proteins. The 39S large subunit contains a 16S rRNA (16S mt-rRNA), a copy of mitochondrial valine transfer RNA (mt-tRNA(Val)), which plays an integral structural role, and 52 different proteins.

The protein resides in the mitochondrion. Its function is as follows. Required for mitoribosome formation and stability, and mitochondrial translation. This Homo sapiens (Human) protein is Small ribosomal subunit protein uS2m (MRPS2).